The primary structure comprises 145 residues: Transcriptional regulator MraZ (145 aa).

SpoVT-AbrB domains lie at 7 to 54 and 83 to 126; these read NATN…GPDL and GVFM…QPQA.

It belongs to the MraZ family. Forms oligomers.

It is found in the cytoplasm. Its subcellular location is the nucleoid. This chain is Transcriptional regulator MraZ, found in Rhizobium johnstonii (strain DSM 114642 / LMG 32736 / 3841) (Rhizobium leguminosarum bv. viciae).